The chain runs to 261 residues: MSTTTCQVVAFLLSILGLAGCIAATGMDMWSTQDLYDNPVTSVFQYEGLWRSCVRQSSGFTECRPYFTILGLPAMLQAVRALMIVGIVLGAIGLLVSIFALKCIRIGSMEDSAKANMTLTSGIMFIVSGLCAIAGVSVFANMLVTNFWMSTANMYTGMGGMVQTVQTRYTFGAALFVGWVAGGLTLIGGVMMCIACRGLAPEETNYKAVSYHASGHSVAYKPGGFKASTGFGSNTKNKKIYDGGARTEDEVQSYPSKHDYV.

The Cytoplasmic segment spans residues 1-6; sequence MSTTTC. The helical transmembrane segment at 7–27 threads the bilayer; it reads QVVAFLLSILGLAGCIAATGM. The Extracellular segment spans residues 28–80; that stretch reads DMWSTQDLYDNPVTSVFQYEGLWRSCVRQSSGFTECRPYFTILGLPAMLQAVR. The chain crosses the membrane as a helical span at residues 81-101; sequence ALMIVGIVLGAIGLLVSIFAL. The Cytoplasmic segment spans residues 102–122; that stretch reads KCIRIGSMEDSAKANMTLTSG. The helical transmembrane segment at 123 to 143 threads the bilayer; the sequence is IMFIVSGLCAIAGVSVFANML. Residues 144 to 174 lie on the Extracellular side of the membrane; sequence VTNFWMSTANMYTGMGGMVQTVQTRYTFGAA. The chain crosses the membrane as a helical span at residues 175–195; that stretch reads LFVGWVAGGLTLIGGVMMCIA. Residues 195–261 are required for role in regulation of RANKL-induced osteoclast differentiation; that stretch reads ACRGLAPEET…QSYPSKHDYV (67 aa). Over 196–261 the chain is Cytoplasmic; sequence CRGLAPEETN…QSYPSKHDYV (66 aa). Phosphoserine is present on serine 214. The interval 242-261 is disordered; it reads DGGARTEDEVQSYPSKHDYV.

This sequence belongs to the claudin family. In terms of assembly, interacts with TJP2/ZO-2. Interacts with TJP1/ZO-1. Interacts with YAP1 (phosphorylated); the interaction sequesters YAP1 away from the nucleus and thereby restricts transcription of YAP1 target genes. Interacts with CLDN19. As to expression, expression is restricted to the lung. In terms of tissue distribution, expression is restricted to the stomach mucosa where it is predominantly observed in the epithelial cells of the pit region and the base of the gastric glands including exocrine and endocrine cells (at protein level).

It localises to the cell junction. The protein resides in the tight junction. Its subcellular location is the cell membrane. It is found in the lateral cell membrane. In terms of biological role, involved in alveolar fluid homeostasis via regulation of alveolar epithelial tight junction composition and therefore ion transport and solute permeability, potentially via downstream regulation of the actin cytoskeleton organization and beta-2-adrenergic signaling. Required for lung alveolarization and maintenance of the paracellular alveolar epithelial barrier. Acts to maintain epithelial progenitor cell proliferation and organ size, via regulation of YAP1 localization away from the nucleus and thereby restriction of YAP1 target gene transcription. Acts as a negative regulator of RANKL-induced osteoclast differentiation, potentially via relocation of TJP2/ZO-2 away from the nucleus, subsequently involved in bone resorption in response to calcium deficiency. Mediates the osteoprotective effects of estrogen, potentially via acting downstream of estrogen signaling independently of RANKL signaling pathways. Its function is as follows. Involved in the maintenance of homeostasis of the alveolar microenvironment via regulation of pH and subsequent T-cell activation in the alveolar space, is therefore indirectly involved in limiting C.neoformans infection. Functionally, required for the formation of the gastric paracellular barrier via its role in tight junction formation, thereby involved in the response to gastric acidification. This Homo sapiens (Human) protein is Claudin-18 (CLDN18).